The primary structure comprises 503 residues: Aspartyl/glutamyl-tRNA(Asn/Gln) amidotransferase subunit B (503 aa).

Belongs to the GatB/GatE family. GatB subfamily. In terms of assembly, heterotrimer of A, B and C subunits.

It carries out the reaction L-glutamyl-tRNA(Gln) + L-glutamine + ATP + H2O = L-glutaminyl-tRNA(Gln) + L-glutamate + ADP + phosphate + H(+). The enzyme catalyses L-aspartyl-tRNA(Asn) + L-glutamine + ATP + H2O = L-asparaginyl-tRNA(Asn) + L-glutamate + ADP + phosphate + 2 H(+). In terms of biological role, allows the formation of correctly charged Asn-tRNA(Asn) or Gln-tRNA(Gln) through the transamidation of misacylated Asp-tRNA(Asn) or Glu-tRNA(Gln) in organisms which lack either or both of asparaginyl-tRNA or glutaminyl-tRNA synthetases. The reaction takes place in the presence of glutamine and ATP through an activated phospho-Asp-tRNA(Asn) or phospho-Glu-tRNA(Gln). In Rhodococcus erythropolis (strain PR4 / NBRC 100887), this protein is Aspartyl/glutamyl-tRNA(Asn/Gln) amidotransferase subunit B.